The primary structure comprises 431 residues: Trigger factor (431 aa).

Residues glycine 165–proline 250 enclose the PPIase FKBP-type domain.

It belongs to the FKBP-type PPIase family. Tig subfamily.

It is found in the cytoplasm. The catalysed reaction is [protein]-peptidylproline (omega=180) = [protein]-peptidylproline (omega=0). Involved in protein export. Acts as a chaperone by maintaining the newly synthesized protein in an open conformation. Functions as a peptidyl-prolyl cis-trans isomerase. This chain is Trigger factor, found in Leuconostoc mesenteroides subsp. mesenteroides (strain ATCC 8293 / DSM 20343 / BCRC 11652 / CCM 1803 / JCM 6124 / NCDO 523 / NBRC 100496 / NCIMB 8023 / NCTC 12954 / NRRL B-1118 / 37Y).